A 232-amino-acid chain; its full sequence is Phosphoglycolate phosphatase (232 aa).

Residue aspartate 8 is the Nucleophile of the active site. Mg(2+) contacts are provided by aspartate 8 and aspartate 10. Residue lysine 155 coordinates substrate. Aspartate 178 and aspartate 182 together coordinate Mg(2+).

The protein belongs to the archaeal SPP-like hydrolase family. Mg(2+) serves as cofactor.

The catalysed reaction is 2-phosphoglycolate + H2O = glycolate + phosphate. Functionally, catalyzes the dephosphorylation of 2-phosphoglycolate. This is Phosphoglycolate phosphatase from Methanospirillum hungatei JF-1 (strain ATCC 27890 / DSM 864 / NBRC 100397 / JF-1).